We begin with the raw amino-acid sequence, 434 residues long: Alpha-enolase (434 aa).

N-acetylserine is present on serine 2. Lysine 5 bears the N6-acetyllysine mark. Serine 27 bears the Phosphoserine mark. Serine 40 is a binding site for Mg(2+). Tyrosine 44 carries the post-translational modification Phosphotyrosine. Lysine 60 is subject to N6-acetyllysine; alternate. Residue lysine 60 is modified to N6-succinyllysine; alternate. N6-acetyllysine occurs at positions 64 and 71. The residue at position 89 (lysine 89) is an N6-acetyllysine; alternate. Position 89 is an N6-succinyllysine; alternate (lysine 89). N6-acetyllysine occurs at positions 92 and 126. Residues histidine 158 and glutamate 167 each coordinate substrate. Lysine 193 and lysine 199 each carry N6-acetyllysine. N6-acetyllysine; alternate is present on lysine 202. Residue lysine 202 forms a Glycyl lysine isopeptide (Lys-Gly) (interchain with G-Cter in SUMO2); alternate linkage. Catalysis depends on glutamate 210, which acts as the Proton donor. An N6-acetyllysine; alternate mark is found at lysine 228 and lysine 233. N6-succinyllysine; alternate is present on lysine 228. At lysine 228 the chain carries N6-(2-hydroxyisobutyryl)lysine; alternate. Lysine 233 carries the post-translational modification N6-malonyllysine; alternate. Mg(2+) is bound at residue aspartate 245. Serine 254 is modified (phosphoserine). The residue at position 256 (lysine 256) is an N6-acetyllysine. A phosphoserine mark is found at serine 263 and serine 272. Lysine 281 is modified (N6-acetyllysine; alternate). An N6-(2-hydroxyisobutyryl)lysine; alternate modification is found at lysine 281. The residue at position 285 (lysine 285) is an N6-acetyllysine. Tyrosine 287 is modified (phosphotyrosine). Phosphoserine is present on serine 291. Residues glutamate 293 and aspartate 318 each coordinate Mg(2+). Substrate is bound by residues glutamate 293 and aspartate 318. Lysine 335 and lysine 343 each carry N6-acetyllysine. Residue lysine 343 is the Proton acceptor of the active site. Residues 370–373 (SHRS) and lysine 394 contribute to the substrate site. The segment at 405–434 (AKYNQLLRIEEELGSKAKFAGRNFRNPLAK) is required for interaction with PLG. Lysine 406 is modified (N6-acetyllysine). Lysine 420 is modified (N6-acetyllysine; alternate). At lysine 420 the chain carries N6-succinyllysine; alternate. Lysine 420 carries the post-translational modification N6-malonyllysine; alternate.

This sequence belongs to the enolase family. Mammalian enolase is composed of 3 isozyme subunits, alpha, beta and gamma, which can form homodimers or heterodimers which are cell-type and development-specific. ENO1 interacts with PLG in the neuronal plasma membrane and promotes its activation. The C-terminal lysine is required for this binding. Interacts with ENO4 and PGAM2. Interacts with CMTM6. Mg(2+) serves as cofactor. Post-translationally, ISGylated. Lysine 2-hydroxyisobutyrylation (Khib) by p300/EP300 activates the phosphopyruvate hydratase activity.

The protein resides in the cytoplasm. The protein localises to the cell membrane. The enzyme catalyses (2R)-2-phosphoglycerate = phosphoenolpyruvate + H2O. Its pathway is carbohydrate degradation; glycolysis; pyruvate from D-glyceraldehyde 3-phosphate: step 4/5. Functionally, glycolytic enzyme the catalyzes the conversion of 2-phosphoglycerate to phosphoenolpyruvate. In addition to glycolysis, involved in various processes such as growth control, hypoxia tolerance and allergic responses. May also function in the intravascular and pericellular fibrinolytic system due to its ability to serve as a receptor and activator of plasminogen on the cell surface of several cell-types such as leukocytes and neurons. Stimulates immunoglobulin production. This chain is Alpha-enolase (ENO1), found in Pongo abelii (Sumatran orangutan).